Here is a 155-residue protein sequence, read N- to C-terminus: Photosystem I reaction center subunit XI (155 aa).

Helical transmembrane passes span 80-102 (LISG…LVSF) and 117-139 (GWSQ…AFFL).

It belongs to the PsaL family.

It is found in the cellular thylakoid membrane. This is Photosystem I reaction center subunit XI from Thermosynechococcus vestitus (strain NIES-2133 / IAM M-273 / BP-1).